The primary structure comprises 275 residues: 3-methyl-2-oxobutanoate hydroxymethyltransferase (275 aa).

Residues Asp-44 and Asp-83 each contribute to the Mg(2+) site. Residues 44 to 45 (DS), Asp-83, and Lys-113 each bind 3-methyl-2-oxobutanoate. Glu-115 serves as a coordination point for Mg(2+). Glu-182 (proton acceptor) is an active-site residue.

It belongs to the PanB family. In terms of assembly, homodecamer; pentamer of dimers. Mg(2+) is required as a cofactor.

The protein resides in the cytoplasm. The catalysed reaction is 3-methyl-2-oxobutanoate + (6R)-5,10-methylene-5,6,7,8-tetrahydrofolate + H2O = 2-dehydropantoate + (6S)-5,6,7,8-tetrahydrofolate. The protein operates within cofactor biosynthesis; (R)-pantothenate biosynthesis; (R)-pantoate from 3-methyl-2-oxobutanoate: step 1/2. In terms of biological role, catalyzes the reversible reaction in which hydroxymethyl group from 5,10-methylenetetrahydrofolate is transferred onto alpha-ketoisovalerate to form ketopantoate. This is 3-methyl-2-oxobutanoate hydroxymethyltransferase from Clostridium botulinum (strain Loch Maree / Type A3).